The chain runs to 69 residues: Brevinin-1CG5 (69 aa).

A signal peptide spans 1–22 (MFTLKKSLLLLFFLGTINLSLC). The propeptide at 23–43 (EQERNAEEERRDDDEMDVEVE) is removed in mature form. A disulfide bridge connects residues C63 and C69.

The protein belongs to the frog skin active peptide (FSAP) family. Brevinin subfamily. Expressed by the skin glands.

It localises to the secreted. Functionally, antimicrobial peptide active against a variety of Gram-positive and Gram-negative bacterial strains. Has antifungal activity against C.albicans ATCC 10231 and a slime mold isolate. Has hemolytic activity against human erythrocytes. The protein is Brevinin-1CG5 of Amolops chunganensis (Chungan torrent frog).